The following is a 370-amino-acid chain: 3-dehydroquinate synthase (370 aa).

NAD(+)-binding positions include 112-116, 136-137, Lys-149, Lys-158, and 176-179; these read GVVGD, TS, and TLRT. The Zn(2+) site is built by Glu-191, His-254, and His-276.

Belongs to the sugar phosphate cyclases superfamily. Dehydroquinate synthase family. It depends on Co(2+) as a cofactor. Requires Zn(2+) as cofactor. NAD(+) serves as cofactor.

The protein localises to the cytoplasm. The catalysed reaction is 7-phospho-2-dehydro-3-deoxy-D-arabino-heptonate = 3-dehydroquinate + phosphate. The protein operates within metabolic intermediate biosynthesis; chorismate biosynthesis; chorismate from D-erythrose 4-phosphate and phosphoenolpyruvate: step 2/7. Catalyzes the conversion of 3-deoxy-D-arabino-heptulosonate 7-phosphate (DAHP) to dehydroquinate (DHQ). In Xanthomonas campestris pv. campestris (strain 8004), this protein is 3-dehydroquinate synthase.